The primary structure comprises 147 residues: Large ribosomal subunit protein bL9 (147 aa).

This sequence belongs to the bacterial ribosomal protein bL9 family.

In terms of biological role, binds to the 23S rRNA. The chain is Large ribosomal subunit protein bL9 from Campylobacter jejuni subsp. jejuni serotype O:23/36 (strain 81-176).